A 513-amino-acid polypeptide reads, in one-letter code: Bifunctional purine biosynthesis protein PurH (513 aa).

Positions Met1–Ile145 constitute an MGS-like domain.

It belongs to the PurH family.

It catalyses the reaction (6R)-10-formyltetrahydrofolate + 5-amino-1-(5-phospho-beta-D-ribosyl)imidazole-4-carboxamide = 5-formamido-1-(5-phospho-D-ribosyl)imidazole-4-carboxamide + (6S)-5,6,7,8-tetrahydrofolate. The enzyme catalyses IMP + H2O = 5-formamido-1-(5-phospho-D-ribosyl)imidazole-4-carboxamide. It participates in purine metabolism; IMP biosynthesis via de novo pathway; 5-formamido-1-(5-phospho-D-ribosyl)imidazole-4-carboxamide from 5-amino-1-(5-phospho-D-ribosyl)imidazole-4-carboxamide (10-formyl THF route): step 1/1. The protein operates within purine metabolism; IMP biosynthesis via de novo pathway; IMP from 5-formamido-1-(5-phospho-D-ribosyl)imidazole-4-carboxamide: step 1/1. The chain is Bifunctional purine biosynthesis protein PurH from Caldicellulosiruptor saccharolyticus (strain ATCC 43494 / DSM 8903 / Tp8T 6331).